The sequence spans 1127 residues: Major DNA-binding protein (1127 aa).

The required for nuclear localization stretch occupies residues 1098–1127; that stretch reads QVKLTSMDHSGKVVGGKKRKIATMFDDLDL.

Belongs to the herpesviridae major DNA-binding protein family. As to quaternary structure, homooligomers. Forms double-helical filaments necessary for the formation of replication compartments within the host nucleus. Interacts with the origin-binding protein. Interacts with the helicase primase complex; this interaction stimulates primer synthesis activity of the helicase-primase complex. Interacts with the DNA polymerase. Interacts with the alkaline exonuclease; this interaction increases its nuclease processivity.

It localises to the host nucleus. Its function is as follows. Plays several crucial roles in viral infection. Participates in the opening of the viral DNA origin to initiate replication by interacting with the origin-binding protein. May disrupt loops, hairpins and other secondary structures present on ssDNA to reduce and eliminate pausing of viral DNA polymerase at specific sites during elongation. Promotes viral DNA recombination by performing strand-transfer, characterized by the ability to transfer a DNA strand from a linear duplex to a complementary single-stranded DNA circle. Can also catalyze the renaturation of complementary single strands. Additionally, reorganizes the host cell nucleus, leading to the formation of prereplicative sites and replication compartments. This process is driven by the protein which can form double-helical filaments in the absence of DNA. This Alcelaphine herpesvirus 1 (strain C500) (AlHV-1) protein is Major DNA-binding protein.